We begin with the raw amino-acid sequence, 67 residues long: MPKLKTKSGAKKRFVPKKSGKVKFRRAGVRHLATFGKTKKQKRHLRGTDHLTPMDEKKIKECFPYAR.

The segment at 1 to 20 is disordered; it reads MPKLKTKSGAKKRFVPKKSG.

Belongs to the bacterial ribosomal protein bL35 family.

The protein is Large ribosomal subunit protein bL35 of Anaeromyxobacter dehalogenans (strain 2CP-1 / ATCC BAA-258).